Here is a 330-residue protein sequence, read N- to C-terminus: MRVLFWGTPAYAVPTLEALHGAGHQIVGVVTQPDRRRGRGSSLMPSPVKARALDLLGDVPVLTPQRIRREPETQEQLAALQADLSVVVAFGQLLPPEVLQQPPLGCWNGHGSLLPRWRGAGPIQWCLMEGDAQTGVGIMAMEPGLDTGPVLLERALDVQLLENAAGLAERLSHLTAELFVEALPRIEAAGPGPEAERLSRLAVTPQSDEGVSLARLLSKDDYRIDWSERALAIHRKVMGLFPGAHCSWRGKRLKLLATEPLVARLADQLSPQAAALSQRQWPSAEPGSILEAVRGVGLVLATSGCPILLRQAQLEGKAASSGDSLIQQLS.

Position 112-115 (112-115 (SLLP)) interacts with (6S)-5,6,7,8-tetrahydrofolate.

It belongs to the Fmt family.

It carries out the reaction L-methionyl-tRNA(fMet) + (6R)-10-formyltetrahydrofolate = N-formyl-L-methionyl-tRNA(fMet) + (6S)-5,6,7,8-tetrahydrofolate + H(+). In terms of biological role, attaches a formyl group to the free amino group of methionyl-tRNA(fMet). The formyl group appears to play a dual role in the initiator identity of N-formylmethionyl-tRNA by promoting its recognition by IF2 and preventing the misappropriation of this tRNA by the elongation apparatus. This chain is Methionyl-tRNA formyltransferase, found in Synechococcus sp. (strain RCC307).